A 293-amino-acid polypeptide reads, in one-letter code: Methylsterol monooxygenase 1 (293 aa).

The next 2 membrane-spanning stretches (helical) occupy residues 55–75 and 100–120; these read LIVH…FQFI and VLLF…YYFT. The Fatty acid hydroxylase domain occupies 145–274; that stretch reads CAVIEDTWHY…FTWWDRIFGT (130 aa). The Histidine box-1 signature appears at 157–161; that stretch reads HRLLH. The Histidine box-2 motif lies at 170-174; it reads HKIHH. The helical transmembrane segment at 199 to 219 threads the bilayer; that stretch reads FFIGIMLLCDHVILLWAWVTV. Positions 249–255 match the Histidine box-3 motif; it reads HHDFHHM.

The protein belongs to the sterol desaturase family. Fe cation serves as cofactor. In terms of processing, ubiquitinated by MARCHF6, leading to proteasomal degradation.

It localises to the endoplasmic reticulum membrane. It catalyses the reaction 4,4-dimethyl-5alpha-cholest-7-en-3beta-ol + 6 Fe(II)-[cytochrome b5] + 3 O2 + 5 H(+) = 4alpha-carboxy-4beta-methyl-5alpha-cholest-7-ene-3beta-ol + 6 Fe(III)-[cytochrome b5] + 4 H2O. The enzyme catalyses 4,4-dimethyl-5alpha-cholesta-8,24-dien-3beta-ol + 6 Fe(II)-[cytochrome b5] + 3 O2 + 5 H(+) = 4beta-methylzymosterol-4alpha-carboxylate + 6 Fe(III)-[cytochrome b5] + 4 H2O. It carries out the reaction 4alpha-methylzymosterol + 6 Fe(II)-[cytochrome b5] + 3 O2 + 5 H(+) = 4alpha-carboxyzymosterol + 6 Fe(III)-[cytochrome b5] + 4 H2O. The catalysed reaction is 4alpha-methyl-5alpha-cholest-7-en-3beta-ol + 6 Fe(II)-[cytochrome b5] + 3 O2 + 5 H(+) = 4alpha-carboxy-5alpha-cholest-7-en-3beta-ol + 6 Fe(III)-[cytochrome b5] + 4 H2O. It catalyses the reaction 4,4-dimethyl-5alpha-cholest-8-en-3beta-ol + 6 Fe(II)-[cytochrome b5] + 3 O2 + 5 H(+) = 4alpha-carboxy-4beta-methyl-5alpha-cholest-8-en-3beta-ol + 6 Fe(III)-[cytochrome b5] + 4 H2O. The enzyme catalyses 4alpha-methyl-5alpha-cholest-8-en-3beta-ol + 6 Fe(II)-[cytochrome b5] + 3 O2 + 5 H(+) = 4alpha-carboxy-5alpha-cholest-8-ene-3beta-ol + 6 Fe(III)-[cytochrome b5] + 4 H2O. The protein operates within steroid biosynthesis; zymosterol biosynthesis; zymosterol from lanosterol: step 3/6. Its pathway is steroid biosynthesis; cholesterol biosynthesis. Catalyzes the three-step monooxygenation required for the demethylation of 4,4-dimethyl and 4alpha-methylsterols, which can be subsequently metabolized to cholesterol. The chain is Methylsterol monooxygenase 1 (MSMO1) from Sus scrofa (Pig).